Here is a 315-residue protein sequence, read N- to C-terminus: Homocysteine S-methyltransferase YbgG (315 aa).

The 308-residue stretch at 2-309 (NPIQHILDTY…ENIQEIAAWA (308 aa)) folds into the Hcy-binding domain. Residues Cys-229, Cys-294, and Cys-295 each contribute to the Zn(2+) site.

Requires Zn(2+) as cofactor.

It carries out the reaction S-methyl-L-methionine + L-homocysteine = 2 L-methionine + H(+). This Bacillus subtilis (strain 168) protein is Homocysteine S-methyltransferase YbgG (ybgG).